Reading from the N-terminus, the 224-residue chain is tRNA (guanine-N(7)-)-methyltransferase (224 aa).

Positions 52, 77, and 126 each coordinate S-adenosyl-L-methionine. D126 is a catalytic residue. The substrate site is built by K130 and D162.

This sequence belongs to the class I-like SAM-binding methyltransferase superfamily. TrmB family.

It catalyses the reaction guanosine(46) in tRNA + S-adenosyl-L-methionine = N(7)-methylguanosine(46) in tRNA + S-adenosyl-L-homocysteine. It functions in the pathway tRNA modification; N(7)-methylguanine-tRNA biosynthesis. Functionally, catalyzes the formation of N(7)-methylguanine at position 46 (m7G46) in tRNA. This is tRNA (guanine-N(7)-)-methyltransferase from Christiangramia forsetii (strain DSM 17595 / CGMCC 1.15422 / KT0803) (Gramella forsetii).